We begin with the raw amino-acid sequence, 134 residues long: Bet1-like protein At1g29060 (134 aa).

Over residues 1–12 (MASNRGAGGSLY) the composition is skewed to gly residues. The tract at residues 1–31 (MASNRGAGGSLYGGADPYRSREGLSTRNASG) is disordered. Topologically, residues 1–110 (MASNRGAGGS…LSIIRSGNNH (110 aa)) are cytoplasmic. Residues 40-102 (DPMHSDLDDE…KNNIRKLNLS (63 aa)) form the t-SNARE coiled-coil homology domain. The chain crosses the membrane as a helical; Anchor for type IV membrane protein span at residues 111-131 (IMHVVLFALLLFFILYMWSKM). Residues 132–134 (FKR) lie on the Vesicular side of the membrane.

The protein belongs to the BET1 family.

It localises to the golgi apparatus membrane. Its subcellular location is the endoplasmic reticulum membrane. Required for vesicular transport from the ER to the Golgi complex. Functions as a SNARE associated with ER-derived vesicles. In Arabidopsis thaliana (Mouse-ear cress), this protein is Bet1-like protein At1g29060.